We begin with the raw amino-acid sequence, 207 residues long: MPRSKSSHRWLKEHFDDEYVKRAQQEGYRSRAVYKLQEIQERDRLLRQGMTVVDLGAAPGGWTQYAAGLVGKHGRVVASDILPMDPLPGVTIVEGDFREAEVLERLLAVLGEGGADLVMSDMAPNMSGMDAVDQPRAMYLAELAAELARTVLKPGGDFLVKLFQGAEFDEYVRMLRTEYDKVSIRKPKASRPRSREVYAVARGRKVV.

Positions 60, 62, 80, 96, and 121 each coordinate S-adenosyl-L-methionine. The Proton acceptor role is filled by K161.

This sequence belongs to the class I-like SAM-binding methyltransferase superfamily. RNA methyltransferase RlmE family.

The protein resides in the cytoplasm. The catalysed reaction is uridine(2552) in 23S rRNA + S-adenosyl-L-methionine = 2'-O-methyluridine(2552) in 23S rRNA + S-adenosyl-L-homocysteine + H(+). Functionally, specifically methylates the uridine in position 2552 of 23S rRNA at the 2'-O position of the ribose in the fully assembled 50S ribosomal subunit. The sequence is that of Ribosomal RNA large subunit methyltransferase E from Thioalkalivibrio sulfidiphilus (strain HL-EbGR7).